The sequence spans 211 residues: Beta-crystallin B3 (211 aa).

Met1 bears the N-acetylmethionine mark. Ala2 carries the N-acetylalanine; in Beta-crystallin B3, N-terminally processed modification. The N-terminal arm stretch occupies residues 2–23 (AEQHSTPEQAAAGKSHGGLGGS). Beta/gamma crystallin 'Greek key' domains lie at 24 to 63 (YKVIVYEMENFQGKRCELTAECPNLTESLLEKVGSIQVES) and 64 to 108 (GPWL…RPLH). Positions 109–113 (IDGPD) are connecting peptide. 2 Beta/gamma crystallin 'Greek key' domains span residues 114-155 (HKLH…RAIN) and 156-198 (GTWV…RRIR). Residues 200 to 211 (QKWHKRGVFLSS) are C-terminal arm.

This sequence belongs to the beta/gamma-crystallin family. Homo/heterodimer, or complexes of higher-order. The structure of beta-crystallin oligomers seems to be stabilized through interactions between the N-terminal arms.

Its function is as follows. Crystallins are the dominant structural components of the vertebrate eye lens. The polypeptide is Beta-crystallin B3 (CRYBB3) (Bos taurus (Bovine)).